We begin with the raw amino-acid sequence, 289 residues long: Minor capsid protein P10 (289 aa).

The hydrophobic stretch occupies residues 1-21 (MMNFILVLLIVAMIGTILVSE).

As to quaternary structure, interacts with the major capsid protein.

The protein resides in the virion. Functionally, one of the minor capsid proteins that constitute a network internal to the major capsid proteins and outside the lipid membrane. The minor capsid proteins glue and stabilize the capsomers. The chain is Minor capsid protein P10 from Chlorella (PBCV-1).